We begin with the raw amino-acid sequence, 298 residues long: GTPase Era (298 aa).

The Era-type G domain occupies 8 to 176 (HCGSVAVIGR…VRDVLALLPE (169 aa)). Residues 16–23 (GRPNVGKS) form a G1 region. 16–23 (GRPNVGKS) is a binding site for GTP. A G2 region spans residues 42–46 (QTTRH). Residues 63–66 (DTPG) are G3. GTP-binding positions include 63–67 (DTPGL) and 125–128 (NKID). A G4 region spans residues 125–128 (NKID). A G5 region spans residues 155–157 (ISA). In terms of domain architecture, KH type-2 spans 199–283 (VREQLMRQLG…FLETWVRVRE (85 aa)).

The protein belongs to the TRAFAC class TrmE-Era-EngA-EngB-Septin-like GTPase superfamily. Era GTPase family. As to quaternary structure, monomer.

The protein localises to the cytoplasm. The protein resides in the cell inner membrane. An essential GTPase that binds both GDP and GTP, with rapid nucleotide exchange. Plays a role in 16S rRNA processing and 30S ribosomal subunit biogenesis and possibly also in cell cycle regulation and energy metabolism. The chain is GTPase Era from Stenotrophomonas maltophilia (strain R551-3).